The sequence spans 135 residues: Crustacean hyperglycemic hormones A* (135 aa).

The signal sequence occupies residues 1–26 (MVSFRTMWSVVVVVVVASLASSGVQG). Glutamine 62 carries the pyrrolidone carboxylic acid modification. Cystine bridges form between cysteine 68/cysteine 104, cysteine 84/cysteine 100, and cysteine 87/cysteine 113. At valine 133 the chain carries Valine amide.

It belongs to the arthropod CHH/MIH/GIH/VIH hormone family. As to expression, produced by the medulla terminalis X-organ in the eyestalks and transported to the sinus gland where they are stored and released.

It localises to the secreted. In terms of biological role, hormone found in the sinus gland of isopods and decapods which controls the blood sugar level. Has a secretagogue action over the amylase released from the midgut gland. May act as a stress hormone and may be involved in the control of molting and reproduction. The polypeptide is Crustacean hyperglycemic hormones A* (CHHA*) (Faxonius limosus (Spinycheek crayfish)).